The sequence spans 286 residues: Sulfate transport system permease protein CysW (286 aa).

6 consecutive transmembrane segments (helical) span residues 20 to 40, 74 to 94, 108 to 128, 145 to 165, 207 to 227, and 255 to 275; these read LLPL…IIIP, LMGV…AFAI, VIDL…VLLY, IIFA…PFVA, LYGV…VSVV, and YTAA…KALL. The ABC transmembrane type-1 domain occupies 69 to 272; that stretch reads IRLTLLMGVI…GISLVTLVLK (204 aa).

This sequence belongs to the binding-protein-dependent transport system permease family. CysTW subfamily. The complex is composed of two ATP-binding proteins (CysA), two transmembrane proteins (CysT and CysW) and a solute-binding protein (CysP).

It is found in the cell inner membrane. Part of the ABC transporter complex CysAWTP (TC 3.A.1.6.1) involved in sulfate/thiosulfate import. Probably responsible for the translocation of the substrate across the membrane. The protein is Sulfate transport system permease protein CysW (cysW) of Synechococcus elongatus (strain ATCC 33912 / PCC 7942 / FACHB-805) (Anacystis nidulans R2).